The primary structure comprises 311 residues: Thioredoxin reductase (311 aa).

33 to 43 (EGFFSGISGGQ) is a binding site for FAD. Cys-138 and Cys-141 form a disulfide bridge. 283–292 (DVQDKYYRQA) serves as a coordination point for FAD.

The protein belongs to the class-II pyridine nucleotide-disulfide oxidoreductase family. As to quaternary structure, homodimer. FAD serves as cofactor.

It is found in the cytoplasm. The enzyme catalyses [thioredoxin]-dithiol + NADP(+) = [thioredoxin]-disulfide + NADPH + H(+). The sequence is that of Thioredoxin reductase (trxB) from Chlamydia pneumoniae (Chlamydophila pneumoniae).